Consider the following 366-residue polypeptide: MYFLVADHREHHVIPFLKTDLQHIYQNPTQKKQIPLEIKQLFTGDYLICKSPSTILACIERKTYKDFAASLKDGRYKNRQKMLSLREQTKCQLYFFVEGPAFPNPQKKINHVAYASIITAMTHLMVRDHIFVIQTKNEAHSSQKLVQLFYAFSKEMVCVVPTSLTPTDEELCIKLWSSLSGISGVIGKILANTCSVAHLVSGQLPPQNIDQLKTPSNRPFPKKVKRMLISISKGNKELEIKLLSGVPNIGKKLAAEILKDHALLFFLNQPVECLANIQIAQKTRTIKLGMKRAEAIHYFLNWCGSARVTVDSQNITETSRPATIQATATQPAATQPLHEISNEALNEASNDASNEVTHTGHQTLFI.

In terms of domain architecture, ERCC4 spans 3–101; it reads FLVADHREHH…QLYFFVEGPA (99 aa).

The protein belongs to the asfivirus EP364R family.

Its function is as follows. Plays a role in the inhibition of type I interferon signaling pathway. Mechanistically, specifically interacts with 2',3'-cGAMP and cleaves it via its phosphodiesterase activity. In turn, prevents 2',3'-cGAMP interaction with host ER-resident STING1 leading to inhibition of downstream signaling pathway and type I interferon production. This African swine fever virus (isolate Pig/Kenya/KEN-50/1950) (ASFV) protein is ERCC4 domain-containing protein EP364R.